A 310-amino-acid chain; its full sequence is Tetrahydromethanopterin S-methyltransferase subunit H (310 aa).

This sequence belongs to the MtrH family. In terms of assembly, the complex is composed of 8 subunits; MtrA, MtrB, MtrC, MtrD, MtrE, MtrF, MtrG and MtrH.

The catalysed reaction is 5-methyl-5,6,7,8-tetrahydromethanopterin + coenzyme M + 2 Na(+)(in) = 5,6,7,8-tetrahydromethanopterin + methyl-coenzyme M + 2 Na(+)(out). It participates in one-carbon metabolism; methanogenesis from CO(2); methyl-coenzyme M from 5,10-methylene-5,6,7,8-tetrahydromethanopterin: step 2/2. Part of a complex that catalyzes the formation of methyl-coenzyme M and tetrahydromethanopterin from coenzyme M and methyl-tetrahydromethanopterin. This is an energy-conserving, sodium-ion translocating step. MtrH catalyzes the transfer of the methyl group from methyl-tetrahydromethanopterin to the corrinoid prosthetic group of MtrA. This Methanothermobacter thermautotrophicus (strain ATCC 29096 / DSM 1053 / JCM 10044 / NBRC 100330 / Delta H) (Methanobacterium thermoautotrophicum) protein is Tetrahydromethanopterin S-methyltransferase subunit H.